Here is a 640-residue protein sequence, read N- to C-terminus: 1,4-alpha-glucan branching enzyme GlgB (640 aa).

Catalysis depends on aspartate 317, which acts as the Nucleophile. Glutamate 370 acts as the Proton donor in catalysis.

Belongs to the glycosyl hydrolase 13 family. GlgB subfamily. Monomer.

The catalysed reaction is Transfers a segment of a (1-&gt;4)-alpha-D-glucan chain to a primary hydroxy group in a similar glucan chain.. It functions in the pathway glycan biosynthesis; glycogen biosynthesis. Functionally, catalyzes the formation of the alpha-1,6-glucosidic linkages in glycogen by scission of a 1,4-alpha-linked oligosaccharide from growing alpha-1,4-glucan chains and the subsequent attachment of the oligosaccharide to the alpha-1,6 position. The polypeptide is 1,4-alpha-glucan branching enzyme GlgB (Nitratidesulfovibrio vulgaris (strain DP4) (Desulfovibrio vulgaris)).